Reading from the N-terminus, the 933-residue chain is Progesterone receptor (933 aa).

The segment at 1–164 (MTELKAKGPR…PATQGVLSPL (164 aa)) is AF3; mediates transcriptional activation. Positions 1–256 (MTELKAKGPR…AAAGGGAAAV (256 aa)) are disordered. The modulating, Pro-Rich stretch occupies residues 1–566 (MTELKAKGPR…YSFESLPQKI (566 aa)). Residue Ser-20 is modified to Phosphoserine. The LXXL motif 1 signature appears at 55–59 (LDGLL). Position 81 is a phosphoserine (Ser-81). Residues 115-119 (LDTLL) carry the LXXL motif 2 motif. 2 positions are modified to phosphoserine: Ser-130 and Ser-162. Positions 165 to 305 (MSRSGCKAGD…LATTMMDFIH (141 aa)) are mediates transcriptional transrepression. The Nuclear localization signal signature appears at 183 to 187 (KVLPR). Phosphoserine is present on residues Ser-190 and Ser-213. A compositionally biased stretch (acidic residues) spans 220-231 (EVEEEDGSESEE). The segment covering 232–246 (SAGPLLKGKPRALGG) has biased composition (low complexity). Ser-294 carries the phosphoserine; by MAPK1 modification. Residues 335–356 (AXSAFAPPRSSPSASSTPVAVG) are compositionally biased toward low complexity. The interval 335–378 (AXSAFAPPRSSPSASSTPVAVGDFPDCAYPPDAEPKDDAYPLYS) is disordered. Ser-345 carries the post-translational modification Phosphoserine; by MAPK. Lys-388 is covalently cross-linked (Glycyl lysine isopeptide (Lys-Gly) (interchain with G-Cter in SUMO); alternate). Lys-388 participates in a covalent cross-link: Glycyl lysine isopeptide (Lys-Gly) (interchain with G-Cter in ubiquitin); alternate. Ser-400 is modified (phosphoserine; by CDK2). A disordered region spans residues 415–452 (PDFPLGPPPPLPPRAPPSRPGEAAVTAAPASASVSSAS). Residues 418-433 (PLGPPPPLPPRAPPSR) show a composition bias toward pro residues. The segment covering 434–452 (PGEAAVTAAPASASVSSAS) has biased composition (low complexity). Residues 456 to 546 (STLECILYKA…VYPPYLNYLR (91 aa)) form an AF1; mediates transcriptional activation region. Lys-531 participates in a covalent cross-link: Glycyl lysine isopeptide (Lys-Gly) (interchain with G-Cter in SUMO). 2 NR C4-type zinc fingers span residues 567–587 (CLIC…CGSC) and 603–627 (CAGR…LRKC). Positions 567–639 (CLICGDEASG…AGMVLGGRKF (73 aa)) form a DNA-binding region, nuclear receptor. At Ser-676 the chain carries Phosphoserine. The NR LBD domain occupies 679–913 (QDIQLIPPLI…EFPEMMSEVI (235 aa)). Residues 687–933 (LINLLMSIEP…MVKPLLFHKK (247 aa)) form an AF2; mediates transcriptional activation region. A progesterone-binding site is contributed by Arg-766.

The protein belongs to the nuclear hormone receptor family. Interacts with SMARD1 and UNC45A. Interacts with CUEDC2; the interaction promotes ubiquitination, decreases sumoylation, and represses transcriptional activity. Interacts with PIAS3; the interaction promotes sumoylation of PR in a hormone-dependent manner, inhibits DNA-binding, and alters nuclear export. Interacts with SP1; the interaction requires ligand-induced phosphorylation on Ser-345 by ERK1/2-MAPK. Interacts with PRMT2. Interacts with NCOA2 and NCOA1. Interacts with KLF9. Interacts with GTF2B. Phosphorylated on multiple serine sites. Several of these sites are hormone-dependent. Phosphorylation on Ser-294 is highly hormone-dependent and modulates ubiquitination and sumoylation on Lys-388. Phosphorylation on Ser-102 and Ser-345 requires induction by hormone. Basal phosphorylation on Ser-81, Ser-162, Ser-190 and Ser-400 is increased in response to progesterone and can be phosphorylated in vitro by the CDK2-A1 complex. Increased levels of phosphorylation on Ser-400 also in the presence of EGF, heregulin, IGF, PMA and FBS. Phosphorylation at this site by CDK2 is ligand-independent, and increases nuclear translocation and transcriptional activity. Phosphorylation at Ser-162 and Ser-294, but not at Ser-190, is impaired during the G(2)/M phase of the cell cycle. Phosphorylation on Ser-345 by ERK1/2 MAPK is required for interaction with SP1. In terms of processing, sumoylation is hormone-dependent and represses transcriptional activity. Sumoylation on all three sites is enhanced by PIAS3. Desumoylated by SENP1. Sumoylation on Lys-388, the main site of sumoylation, is repressed by ubiquitination on the same site, and modulated by phosphorylation at Ser-294. Post-translationally, ubiquitination is hormone-dependent and represses sumoylation on the same site. Promoted by MAPK-mediated phosphorylation on Ser-294. Ubiquitinated by UBR5, leading to its degradation: UBR5 specifically recognizes and binds ligand-bound PGR when it is not associated with coactivators (NCOAs). In presence of NCOAs, the UBR5-degron is not accessible, preventing its ubiquitination and degradation. Palmitoylated by ZDHHC7 and ZDHHC21. Palmitoylation is required for plasma membrane targeting and for rapid intracellular signaling via ERK and AKT kinases and cAMP generation.

The protein resides in the nucleus. It localises to the cytoplasm. Its function is as follows. The steroid hormones and their receptors are involved in the regulation of eukaryotic gene expression and affect cellular proliferation and differentiation in target tissues. Transcriptional activator of several progesteron-dependent promoters in a variety of cell types. Involved in activation of SRC-dependent MAPK signaling on hormone stimulation. This chain is Progesterone receptor (PGR), found in Pan troglodytes (Chimpanzee).